The following is a 202-amino-acid chain: Dephospho-CoA kinase (202 aa).

Residues 6–202 (KVSITGDLSS…EYFYALKGAL (197 aa)) enclose the DPCK domain. Residue 14-19 (SSGKTE) participates in ATP binding.

The protein belongs to the CoaE family.

The protein localises to the cytoplasm. It catalyses the reaction 3'-dephospho-CoA + ATP = ADP + CoA + H(+). The protein operates within cofactor biosynthesis; coenzyme A biosynthesis; CoA from (R)-pantothenate: step 5/5. Functionally, catalyzes the phosphorylation of the 3'-hydroxyl group of dephosphocoenzyme A to form coenzyme A. The protein is Dephospho-CoA kinase of Chlamydia pneumoniae (Chlamydophila pneumoniae).